Consider the following 230-residue polypeptide: Orotidine 5'-phosphate decarboxylase (230 aa).

Substrate-binding positions include D10, K32, 59–68 (DLKYHDIPNT), T119, R180, Q189, G209, and R210. Catalysis depends on K61, which acts as the Proton donor.

This sequence belongs to the OMP decarboxylase family. Type 1 subfamily. As to quaternary structure, homodimer.

It catalyses the reaction orotidine 5'-phosphate + H(+) = UMP + CO2. Its pathway is pyrimidine metabolism; UMP biosynthesis via de novo pathway; UMP from orotate: step 2/2. Catalyzes the decarboxylation of orotidine 5'-monophosphate (OMP) to uridine 5'-monophosphate (UMP). The protein is Orotidine 5'-phosphate decarboxylase of Glaesserella parasuis serovar 5 (strain SH0165) (Haemophilus parasuis).